The sequence spans 1463 residues: MESHMFSVQQIQPNVISVRLFKRKVGGLGFLVKERVSKPPVIISDLIRGGAAEQSGLIQAGDIILAVNGQPLVDLSYDSALEVLRGIASETHVVLILRGPEGFTTHLETTFTGDGTPKTIRVTRPGRVTPPPDAPAGREQPRAVDGAPGPGNGPQHAPDPGQEASSLAQANGLAARPPGQDPAKKSTGVALQGSGENNKLLKEIEPVLNLLTSGGKAINGGGPAKTETKDVEVQVDRDPDSKSHKPLPLGVENDRVFNDLWGKGNMPVVLNNPYSEKEQPSASGKQSPTKNGSPSKCPRFLKVKNWETDVVLSDTLHLKSTLGTGCTEHICMGSVMLPSQQIRKPEDVRTKEQLFPLAKEFIDQYYSSIKRFGSKAHMERLEEVNKEIETTSTYQLKDTELIYGAKHAWRNASRCVGRIQWSKLQVFDARDCTTAHGMFNYICNHIKYATNKGNLRSAITIFPQRTDGKHDFRVWNSQLIRYAGYKQPDGSILGDPANVEFTEICIQQGWKPPRSRFDVLPLLLQANGNDPELFQIPPELVLEVPIRHPKFEWFKDLGLKWYGLPAVSNMLLEIGGLEFSACPFSGWYMGTEIGVRDYCDSSRYNILEDVAKKMNLDMRKTSSLWKDQALVEINIAVLYSFQSDKVTIVDHHSATESFIKHMENEYRCRGGCPADWVWIVPPMSGSITPVFHQEMLNYRLTPSFEYQPDPWNTHVWKGTNGTPTKRRAIGFKKLAEAVKFSAKLMGQAMAKRVKATILYATETGKSQAYAKTLCEIFKHAFDAKVMSMEEYDIVHLEHETLVLVVTSTFGNGDPPENGEKFGCALMEMRNPNSVHEERKYPEPLRFFPRKGPPLSRGDTEVHGLAAVRDSQLRSYKVRFNSVSSYSDSRKSSGDGPDLRDNFESTGPLANVRFSVFGLGSRAYPHFCAFGHAVDTLLEELGGERILKMREGDELCGQEEAFRTWAKKVFKAACDVFCVGDDVNIEKANNSLISNDRSWKRNKFRLTYVAEAPELTQGLSNVHKKRVSAARLLSRQNLQSPKSSRSTIFVRLHTNGNQELQYQPGDHLGVFPGNHEDLVNALIERLEDAPPANQLVKVELLEERNTALGVISNWTDEHRLPPCTIFQAFKYYLDITTPPTPLQLQQFASLATSEKERQRLLVLSKGLQEYEEWKWGKNPTIVEVLEEFPSIQMPSTLLLTQLSLLQPRYYSISSSPDMYPDEVHLTVAIVSYRTRDGEGPIHHGVCSSWLNRIQADEVVPCFVRGAPSFHLPQNPQVPCILVGPGTGIAPFRSFWQQRQFDIQHKGMSPCPMVLVFGCRQSKIDHIYREEALQAKSKGVFRELYTAYSREPDKPKKYVQDILQEQLAEPVYRALKEQGGHIYVCGDVTMAADVLKAIQRIMTQKGKLSVEDAGVFISRLRDDNRYHEDIFGVTLRTYEVTNRLRSESIAFIEESKKDTDEVFSS.

Residues 1 to 200 (MESHMFSVQQ…LQGSGENNKL (200 aa)) form an interaction with NOSIP region. Positions 17–99 (SVRLFKRKVG…ETHVVLILRG (83 aa)) constitute a PDZ domain. Disordered stretches follow at residues 110–194 (TFTG…LQGS), 215–250 (GKAI…LPLG), and 268–298 (VVLN…SKCP). Positions 158-240 (PDPGQEASSL…VEVQVDRDPD (83 aa)) are DYNLL1/PIN/nNOS-inhibiting protein-binding. Over residues 226–243 (TETKDVEVQVDRDPDSKS) the composition is skewed to basic and acidic residues. Polar residues predominate over residues 280 to 294 (PSASGKQSPTKNGSP). (6R)-L-erythro-5,6,7,8-tetrahydrobiopterin is bound at residue serine 334. Cysteine 415 contributes to the heme b binding site. The L-arginine site is built by glutamine 478, tryptophan 587, tyrosine 588, and glutamate 592. The (6R)-L-erythro-5,6,7,8-tetrahydrobiopterin site is built by valine 677, tryptophan 678, and phenylalanine 691. Heme b is bound at residue tyrosine 706. The segment at 725 to 745 (KRRAIGFKKLAEAVKFSAKLM) is calmodulin-binding. Residues 755–969 (ATILYATETG…AFRTWAKKVF (215 aa)) form the Flavodoxin-like domain. Residues threonine 761, glutamate 762, threonine 763, lysine 765, serine 766, serine 807, threonine 808, and glycine 812 each contribute to the FMN site. Phosphoserine occurs at positions 881, 891, and 892. The FMN site is built by serine 920, histidine 925, cysteine 927, glutamate 953, and glutamine 957. Positions 1024 to 1271 (KRVSAARLLS…VRGAPSFHLP (248 aa)) constitute an FAD-binding FR-type domain. Residue arginine 1044 coordinates NADP(+). FAD-binding residues include histidine 1066, arginine 1207, tyrosine 1208, tyrosine 1209, serine 1210, threonine 1225, and alanine 1227. Serine 1230 lines the NADP(+) pocket. 4 residues coordinate FAD: tyrosine 1231, valine 1244, cysteine 1245, and serine 1246. Threonine 1285, arginine 1318, serine 1347, arginine 1348, lysine 1354, tyrosine 1356, glutamine 1358, aspartate 1391, threonine 1432, and arginine 1434 together coordinate NADP(+).

This sequence belongs to the NOS family. Homodimer. Interacts with DLG4; the interaction possibly being prevented by the association between NOS1 and CAPON. Forms a ternary complex with CAPON and RASD1. Forms a ternary complex with CAPON and SYN1. Interacts with ZDHHC23. Interacts with NOSIP; which may impair its synaptic location. Interacts with HTR4. Interacts with SLC6A4. Interacts with VAC14. Interacts (via N-terminal domain) with DLG4 (via N-terminal tandem pair of PDZ domains). Interacts with SLC6A4. Forms a complex with ASL, ASS1 and SLC7A1; the complex regulates cell-autonomous L-arginine synthesis and citrulline recycling while channeling extracellular L-arginine to nitric oxide synthesis pathway. Interacts with DMD; localizes NOS1 to sarcolemma in muscle cells. Interacts with DYNLL1; inhibits the nitric oxide synthase activity. Requires heme b as cofactor. FAD is required as a cofactor. The cofactor is FMN. It depends on (6R)-L-erythro-5,6,7,8-tetrahydrobiopterin as a cofactor. Post-translationally, ubiquitinated; mediated by STUB1/CHIP in the presence of Hsp70 and Hsp40 (in vitro).

The protein resides in the cell membrane. Its subcellular location is the sarcolemma. The protein localises to the cell projection. It is found in the dendritic spine. The enzyme catalyses 2 L-arginine + 3 NADPH + 4 O2 + H(+) = 2 L-citrulline + 2 nitric oxide + 3 NADP(+) + 4 H2O. Stimulated by calcium/calmodulin. Inhibited by DYNLL1 that prevents the dimerization of the protein. Inhibited by NOSIP. In terms of biological role, produces nitric oxide (NO) which is a messenger molecule with diverse functions throughout the body. In the brain and peripheral nervous system, NO displays many properties of a neurotransmitter. Probably has nitrosylase activity and mediates cysteine S-nitrosylation of cytoplasmic target proteins such SRR. The sequence is that of Nitric oxide synthase 1 (NOS1) from Ovis aries (Sheep).